The following is a 284-amino-acid chain: RNase adapter protein RapZ (284 aa).

8-15 (GRSGSGKS) is an ATP binding site. 56–59 (DVRN) provides a ligand contact to GTP. The interval 266–284 (RSRGKNAQSRHRTLEKSKS) is RNA-binding.

Belongs to the RapZ-like family. RapZ subfamily. Homotrimer.

In terms of biological role, modulates the synthesis of GlmS, by affecting the processing and stability of the regulatory small RNA GlmZ. When glucosamine-6-phosphate (GlcN6P) concentrations are high in the cell, RapZ binds GlmZ and targets it to cleavage by RNase E. Consequently, GlmZ is inactivated and unable to activate GlmS synthesis. Under low GlcN6P concentrations, RapZ is sequestered and inactivated by an other regulatory small RNA, GlmY, preventing GlmZ degradation and leading to synthesis of GlmS. This chain is RNase adapter protein RapZ, found in Sodalis glossinidius (strain morsitans).